The primary structure comprises 116 residues: Large ribosomal subunit protein bL17 (116 aa).

It belongs to the bacterial ribosomal protein bL17 family. As to quaternary structure, part of the 50S ribosomal subunit. Contacts protein L32.

The chain is Large ribosomal subunit protein bL17 from Wolinella succinogenes (strain ATCC 29543 / DSM 1740 / CCUG 13145 / JCM 31913 / LMG 7466 / NCTC 11488 / FDC 602W) (Vibrio succinogenes).